We begin with the raw amino-acid sequence, 674 residues long: Probable nucleolar GTP-binding protein 1 (674 aa).

In terms of domain architecture, OBG-type G spans 169–346; sequence RTLLLTGYPN…VKDTACSILF (178 aa). Residues 175–182, 221–225, and 289–292 contribute to the GTP site; these read GYPNVGKS, DTPGI, and NKID. The span at 518-527 shows a compositional bias: basic and acidic residues; that stretch reads RINHQIKDSS. 2 disordered regions span residues 518–538 and 564–674; these read RINH…RRGI and VRDH…NDFR. Basic residues predominate over residues 570–580; sequence SRISGKKRSRS. Basic and acidic residues-rich tracts occupy residues 619–633 and 641–653; these read GFHD…DKLD and NQDG…DRHV.

Belongs to the TRAFAC class OBG-HflX-like GTPase superfamily. OBG GTPase family. NOG subfamily.

The protein localises to the nucleus. It localises to the nucleolus. Functionally, involved in the biogenesis of the 60S ribosomal subunit. In Dictyostelium discoideum (Social amoeba), this protein is Probable nucleolar GTP-binding protein 1 (nog1).